The following is a 265-amino-acid chain: 3-methyl-2-oxobutanoate hydroxymethyltransferase (265 aa).

Residues Asp-45 and Asp-84 each contribute to the Mg(2+) site. 3-methyl-2-oxobutanoate contacts are provided by residues 45–46, Asp-84, and Lys-112; that span reads DS. Glu-114 contacts Mg(2+). The active-site Proton acceptor is Glu-182.

Belongs to the PanB family. Homodecamer; pentamer of dimers. Mg(2+) is required as a cofactor.

The protein localises to the cytoplasm. It carries out the reaction 3-methyl-2-oxobutanoate + (6R)-5,10-methylene-5,6,7,8-tetrahydrofolate + H2O = 2-dehydropantoate + (6S)-5,6,7,8-tetrahydrofolate. It functions in the pathway cofactor biosynthesis; (R)-pantothenate biosynthesis; (R)-pantoate from 3-methyl-2-oxobutanoate: step 1/2. In terms of biological role, catalyzes the reversible reaction in which hydroxymethyl group from 5,10-methylenetetrahydrofolate is transferred onto alpha-ketoisovalerate to form ketopantoate. The protein is 3-methyl-2-oxobutanoate hydroxymethyltransferase of Baumannia cicadellinicola subsp. Homalodisca coagulata.